The following is a 395-amino-acid chain: Elongation factor Tu (395 aa).

The 195-residue stretch at 10 to 204 folds into the tr-type G domain; the sequence is KPHVNIGTIG…AVDEYIPTPQ (195 aa). A G1 region spans residues 19 to 26; the sequence is GHVDHGKT. Position 19–26 (19–26) interacts with GTP; sequence GHVDHGKT. Thr26 serves as a coordination point for Mg(2+). Residues 60–64 are G2; sequence GITIS. Positions 81–84 are G3; that stretch reads DCPG. GTP contacts are provided by residues 81–85 and 136–139; these read DCPGH and NKCD. Positions 136–139 are G4; the sequence is NKCD. Residues 174-176 are G5; sequence SAL.

It belongs to the TRAFAC class translation factor GTPase superfamily. Classic translation factor GTPase family. EF-Tu/EF-1A subfamily. Monomer.

It is found in the cytoplasm. It catalyses the reaction GTP + H2O = GDP + phosphate + H(+). In terms of biological role, GTP hydrolase that promotes the GTP-dependent binding of aminoacyl-tRNA to the A-site of ribosomes during protein biosynthesis. The chain is Elongation factor Tu from Geobacillus sp. (strain WCH70).